The chain runs to 426 residues: Tubby protein homolog 1 (426 aa).

The segment at 16-28 (QRKMLEDKQKQKR) is required for localization to cilia in AWB sensory neurons. A disordered region spans residues 19–39 (MLEDKQKQKRHQSAGSVRTTS).

Belongs to the TUB family. Interacts with rgb-3. Expressed in ciliated sensory neurons.

The protein resides in the cytoplasm. It localises to the cell projection. Its subcellular location is the axon. It is found in the dendrite. The protein localises to the cilium. In terms of biological role, has a role in fat regulation independent of daf-16. Implicated in ciliar sensory function which is required for normal sensory behavior such as chemotaxis. Required for extension and growth of sensory neuronal cilia during postembryonic development, potentially via mediating signaling protein transport and localization of PI(4,5)P2 to the ciliary base. Functions in life span control via the insulin/IGF-1 pathway. Thought to be involved in neuronal trafficking. The protein is Tubby protein homolog 1 of Caenorhabditis elegans.